We begin with the raw amino-acid sequence, 114 residues long: UPF0342 protein NT01CX_2274 (114 aa).

Belongs to the UPF0342 family.

The polypeptide is UPF0342 protein NT01CX_2274 (Clostridium novyi (strain NT)).